The sequence spans 953 residues: Translation initiation factor IF-2 (953 aa).

Disordered regions lie at residues 48-248 (SSFS…AELA) and 279-363 (TKLK…TERK). Composition is skewed to basic and acidic residues over residues 80-89 (TGSEHAEKTQ), 98-111 (FKAEREARAKEQAA), and 140-188 (QGDK…ENHK). A compositionally biased stretch (polar residues) spans 191–207 (RFTNQKKQGRQEPQSKS). Basic and acidic residues predominate over residues 229–248 (RQSETRFRAQQEAKRLAELA). The segment covering 282-291 (KSSNISAKST) has biased composition (polar residues). A compositionally biased stretch (basic and acidic residues) spans 300 to 317 (ARPEKNRELTHHSQEGQK). Low complexity predominate over residues 322-338 (SWNSQNQVRNQKNSNWN). Residues 339–348 (KNKKTKKGKN) are compositionally biased toward basic residues. Residues 454-623 (ERAPVVTIMG…LLVAEVEELK (170 aa)) form the tr-type G domain. A G1 region spans residues 463-470 (GHVDHGKT). 463 to 470 (GHVDHGKT) serves as a coordination point for GTP. The interval 488–492 (GITQH) is G2. Residues 509 to 512 (DTPG) form a G3 region. GTP contacts are provided by residues 509-513 (DTPGH) and 563-566 (NKID). Residues 563-566 (NKID) form a G4 region. Residues 599–601 (SAK) are G5.

Belongs to the TRAFAC class translation factor GTPase superfamily. Classic translation factor GTPase family. IF-2 subfamily.

The protein resides in the cytoplasm. One of the essential components for the initiation of protein synthesis. Protects formylmethionyl-tRNA from spontaneous hydrolysis and promotes its binding to the 30S ribosomal subunits. Also involved in the hydrolysis of GTP during the formation of the 70S ribosomal complex. This Streptococcus pyogenes serotype M18 (strain MGAS8232) protein is Translation initiation factor IF-2.